The chain runs to 193 residues: Probable nicotinate-nucleotide adenylyltransferase (193 aa).

It belongs to the NadD family.

The catalysed reaction is nicotinate beta-D-ribonucleotide + ATP + H(+) = deamido-NAD(+) + diphosphate. It participates in cofactor biosynthesis; NAD(+) biosynthesis; deamido-NAD(+) from nicotinate D-ribonucleotide: step 1/1. Its function is as follows. Catalyzes the reversible adenylation of nicotinate mononucleotide (NaMN) to nicotinic acid adenine dinucleotide (NaAD). This chain is Probable nicotinate-nucleotide adenylyltransferase, found in Chlorobium phaeovibrioides (strain DSM 265 / 1930) (Prosthecochloris vibrioformis (strain DSM 265)).